A 219-amino-acid polypeptide reads, in one-letter code: Small ribosomal subunit protein uS3c (219 aa).

The region spanning 43–118 (IKNYVQNNMI…KLNITITRIE (76 aa)) is the KH type-2 domain.

Belongs to the universal ribosomal protein uS3 family. Part of the 30S ribosomal subunit.

The protein localises to the plastid. This chain is Small ribosomal subunit protein uS3c (rps3), found in Cuscuta exaltata (Tall dodder).